We begin with the raw amino-acid sequence, 77 residues long: Major outer membrane lipoprotein Lpp (77 aa).

The N-terminal stretch at 1–19 (MNRTKLVLGAVILGSHSAG) is a signal peptide. Cys-20 is lipidated: N-palmitoyl cysteine. Cys-20 is lipidated: S-diacylglycerol cysteine. 2 repeats span residues 23-33 (NAKIDQLSSDV) and 37-47 (NAKVDQLSNDV). The stretch at 26 to 74 (IDQLSSDVQTLNAKVDQLSNDVNAMRSDVQAAKDDAARANQRLDNQAHA) forms a coiled coil. Residues 56–77 (AAKDDAARANQRLDNQAHAYKK) form a disordered region. Position 77 is an N6-murein peptidoglycan lysine (Lys-77).

The protein belongs to the Lpp family. Homotrimer.

It localises to the cell outer membrane. The protein localises to the secreted. The protein resides in the cell wall. Its function is as follows. A highly abundant outer membrane lipoprotein that controls the distance between the inner and outer membranes. The only protein known to be covalently linked to the peptidoglycan network (PGN). Also non-covalently binds the PGN. The link between the cell outer membrane and PGN contributes to maintenance of the structural and functional integrity of the cell envelope, and maintains the correct distance between the PGN and the outer membrane. In Serratia marcescens, this protein is Major outer membrane lipoprotein Lpp.